We begin with the raw amino-acid sequence, 452 residues long: MLEYMDYVLRQFEECTSWNKDNSYENIVGTSRNILQFDIPTALKVQVSNRATPYSYNTLELTNNKTINGSLTYLYTNCENLDQFIEGSSSVHLQQMTQSFRYIEPYYHHYKNNSKLEVPKVPELPISLAYGRMFYPSSSLEAMYIRRFPNYYQFILKCSSSKSGSSILTMYLQKNTGINCQELIFSTNEALLGYRFVHNFVSAGSKSNLSLYNNSSLSIGSEIWCALLNLSPGCSTTLRYCSHATNTGKPLIFTLSLNPLYGHVSSTYSIKTHENLTFCTKYDFNIYSIQSNLTLGMELWKNSSSIPVERPSEPVETIEDWPQLSHDKTPMYYHLLTRTENSGASSQRLLKDLNLTFQSSLQKINKERNVIENFNERYSEANFTQVFKVSTSLRDMNLRLLWEGKIRGFLISAGAELTQPPEISTNGLDSLEHQNWSLISPSKFGIQLQYSA.

It belongs to the MDM10 family. As to quaternary structure, component of the ER-mitochondria encounter structure (ERMES) or MDM complex, composed of MMM1, MDM10, MDM12 and MDM34. Associates with the mitochondrial outer membrane sorting assembly machinery SAM(core) complex.

It is found in the mitochondrion outer membrane. In terms of biological role, component of the ERMES/MDM complex, which serves as a molecular tether to connect the endoplasmic reticulum and mitochondria. Components of this complex are involved in the control of mitochondrial shape and protein biogenesis and may function in phospholipid exchange. MDM10 is involved in the late assembly steps of the general translocase of the mitochondrial outer membrane (TOM complex). Functions in the TOM40-specific route of the assembly of outer membrane beta-barrel proteins, including the association of TOM40 with the receptor TOM22 and small TOM proteins. Can associate with the SAM(core) complex as well as the MDM12-MMM1 complex, both involved in late steps of the major beta-barrel assembly pathway, that is responsible for biogenesis of all outer membrane beta-barrel proteins. May act as a switch that shuttles between both complexes and channels precursor proteins into the TOM40-specific pathway. Plays a role in mitochondrial morphology and in the inheritance of mitochondria. The chain is Mitochondrial distribution and morphology protein 10 from Kluyveromyces lactis (strain ATCC 8585 / CBS 2359 / DSM 70799 / NBRC 1267 / NRRL Y-1140 / WM37) (Yeast).